Consider the following 224-residue polypeptide: ATP-dependent dethiobiotin synthetase BioD (224 aa).

An ATP-binding site is contributed by 13 to 18 (NVGKTI). Residue Thr17 participates in Mg(2+) binding. Lys38 is an active-site residue. Ser42 serves as a coordination point for substrate. ATP-binding positions include Asp55, 116–119 (EGAG), 176–177 (NN), and Asn211. Mg(2+) contacts are provided by Asp55 and Glu116.

Belongs to the dethiobiotin synthetase family. In terms of assembly, homodimer. Mg(2+) serves as cofactor.

It localises to the cytoplasm. The enzyme catalyses (7R,8S)-7,8-diammoniononanoate + CO2 + ATP = (4R,5S)-dethiobiotin + ADP + phosphate + 3 H(+). It functions in the pathway cofactor biosynthesis; biotin biosynthesis; biotin from 7,8-diaminononanoate: step 1/2. In terms of biological role, catalyzes a mechanistically unusual reaction, the ATP-dependent insertion of CO2 between the N7 and N8 nitrogen atoms of 7,8-diaminopelargonic acid (DAPA, also called 7,8-diammoniononanoate) to form a ureido ring. This Buchnera aphidicola subsp. Acyrthosiphon pisum (strain APS) (Acyrthosiphon pisum symbiotic bacterium) protein is ATP-dependent dethiobiotin synthetase BioD.